A 363-amino-acid polypeptide reads, in one-letter code: FMNH(2)-dependent dimethylsulfone monooxygenase (363 aa).

Belongs to the SsuD family.

The catalysed reaction is dimethyl sulfone + FMNH2 + O2 = methanesulfinate + FMN + formaldehyde + H2O + 2 H(+). Functionally, involved in the dimethyl sulfide degradation pathway. Catalyzes the oxidation of dimethylsulfone (DMSO2) to yield methanesulfinate, which is oxidized spontaneously to methanesulfonate in the presence of dioxygen and FMNH(2). This is FMNH(2)-dependent dimethylsulfone monooxygenase from Pseudomonas putida (Arthrobacter siderocapsulatus).